The chain runs to 503 residues: Probable protein kinase UbiB (503 aa).

A helical transmembrane segment spans residues T13–L35. The region spanning E120–V491 is the Protein kinase domain. Residues I126–V134 and K148 contribute to the ATP site. Catalysis depends on D283, which acts as the Proton acceptor. A helical transmembrane segment spans residues Q485–L502.

It belongs to the ABC1 family. UbiB subfamily.

It localises to the cell inner membrane. Its pathway is cofactor biosynthesis; ubiquinone biosynthesis [regulation]. In terms of biological role, is probably a protein kinase regulator of UbiI activity which is involved in aerobic coenzyme Q (ubiquinone) biosynthesis. This chain is Probable protein kinase UbiB, found in Neisseria meningitidis serogroup A / serotype 4A (strain DSM 15465 / Z2491).